The primary structure comprises 924 residues: MLEPRGADIPILFLVLVVLPVVAYILLGKWSNISEKRVRANLLAQMAAEEALRAETVVNADRGVRFESVATENRAQRTRTKTVSAGGGAVRAEFDAGARETVAEQRSDSVTATCGVTVVAPVNNNELHVCARCFGPAKTRCSRCKSVRYCSGKCQIIHWRVAHKDECVPVESCSSSSERVSFEKDSVLYDHGMDSTMYSNNTTQAAKGKTSKSSVDFASLGISQNDITPQINTQGRKSVGKQHSSKANRESCRRDSATVFDSSDEAASAGGDNKTSHIKHKSRGNSYAAETNPRRHSVDSSAVQMNGQSFVSGMQESHKHENNLGVRSSFGCPNTQYPSNGTRTATLPRTGINKSGEQSCTETSKKGQVAAVSKTVRSKDTGISEESNGISSTMGIMKMMGLRNSTKHDDRYKNLKMLFPYEEFLKFFQCEVFDLSPRGLVNCGNSCYANAVLQSLTCTKPLVAYLLRRSHSRSCSGKDWCLMCELEQHVMMLRESGGPLSASRILSHMRSINCQIGDGSQEDAHEFLRLLVASMQSICLERLGGETKVDPRLQETTLVQHMFGGRLRSKVKCLRCDHESERYENIMDLTLEIYGWVESLQDALTQFTRPEDLDGENMYRCSRCAGYVRARKELSIHEAPNILTIVLKRFQEGRYGKINKCISFPEMLDMIPFMTRTGDVPPLYMLYAVIVHLDTLNASFSGHYISYVKDLRGNWYRIDDSEIHPVPMTQVMSEGAYMLFYMRSYPRPQRGEHNGKAPVHHSQPRNEMKEQRKPVNRFKPRADHKNTESSSSEWSLFTSSDEASFTTESTRDSFSTIDYTDVCHVVDSSSPFAIFNNVYHNVEPSPHNTVACRMFSGTKPETRYFVEQETNHNNTVVLDATPSLYPIPAPYPPHDYYDQSMYVNYETNPEFNNGQDQDRTYSYW.

Positions 130, 133, 141, 144, 150, 154, 163, and 167 each coordinate Zn(2+). The MYND-type zinc-finger motif lies at 130-167 (CARCFGPAKTRCSRCKSVRYCSGKCQIIHWRVAHKDEC). Residues 226–236 (DITPQINTQGR) are compositionally biased toward polar residues. 2 disordered regions span residues 226-301 (DITP…VDSS) and 317-366 (SHKH…TSKK). The span at 247–256 (ANRESCRRDS) shows a compositional bias: basic and acidic residues. Positions 331–362 (GCPNTQYPSNGTRTATLPRTGINKSGEQSCTE) are enriched in polar residues. A USP domain is found at 438–744 (RGLVNCGNSC…GAYMLFYMRS (307 aa)). Cys-447 acts as the Nucleophile in catalysis. The active-site Proton acceptor is His-703. The disordered stretch occupies residues 750 to 793 (RGEHNGKAPVHHSQPRNEMKEQRKPVNRFKPRADHKNTESSSSE). Residues 764–773 (PRNEMKEQRK) show a composition bias toward basic and acidic residues.

It belongs to the peptidase C19 family. As to quaternary structure, interacts with DA1. In terms of tissue distribution, highly expressed in rosette leaves and inflorescence. Expressed at low levels in cotyledons, stems, cauline leaves and siliques.

The protein resides in the cytoplasm. It is found in the nucleus. The catalysed reaction is Thiol-dependent hydrolysis of ester, thioester, amide, peptide and isopeptide bonds formed by the C-terminal Gly of ubiquitin (a 76-residue protein attached to proteins as an intracellular targeting signal).. Functionally, recognizes and hydrolyzes the peptide bond at the C-terminal Gly of ubiquitin. Involved in the processing of poly-ubiquitin precursors as well as that of ubiquitinated proteins. Involved in the regulation of organ size. Acts as a positive regulator of cell proliferation. Possesses deubiquitinating enzyme activity in vitro. The enzyme activity of UBP15 is required for its function in regulation of cell proliferation. Functions antagonistically in a common pathway with DA1 to regulate seed size. Acts maternally to regulate seed size by promoting cell proliferation in the integuments of ovules and developing seeds. Functions independently of DA2 and BB. The sequence is that of Ubiquitin carboxyl-terminal hydrolase 15 from Arabidopsis thaliana (Mouse-ear cress).